We begin with the raw amino-acid sequence, 300 residues long: 33 kDa chaperonin (300 aa).

Intrachain disulfides connect C247/C249 and C280/C283.

Belongs to the HSP33 family. Under oxidizing conditions two disulfide bonds are formed involving the reactive cysteines. Under reducing conditions zinc is bound to the reactive cysteines and the protein is inactive.

Its subcellular location is the cytoplasm. Its function is as follows. Redox regulated molecular chaperone. Protects both thermally unfolding and oxidatively damaged proteins from irreversible aggregation. Plays an important role in the bacterial defense system toward oxidative stress. The sequence is that of 33 kDa chaperonin from Prochlorococcus marinus (strain MIT 9312).